Reading from the N-terminus, the 479-residue chain is Calcium-dependent mitochondrial ATP-magnesium/phosphate carrier protein 3 (479 aa).

The Mitochondrial intermembrane portion of the chain corresponds to 1 to 208 (MESSKPKNRN…ISKHVKRSRL (208 aa)). EF-hand domains lie at 33–68 (EREIRIRSLFDFFDNSNLGFLDYAQIEKGLASLQIP), 69–104 (PEYKYARDLFRVCDANRDGRVDYQEFRRYIDAKELE), 105–135 (LYRIFQAIDVEHNGCILPEELWEALVKAGIE), and 136–171 (IDDEELARFVEHVDKDNNGTITFEEWRDFLLLYPHE). Ca(2+) is bound by residues Asp82, Asn84, Asp86, Arg88, and Glu93. Positions 149, 151, 153, 155, and 160 each coordinate Ca(2+). Solcar repeat units lie at residues 203–286 (VKRS…LKPM), 294–381 (IGTS…LKDL), and 392–475 (PGPL…MKKN). Residues 209 to 226 (LLAGGLAGAVSRTATAPL) traverse the membrane as a helical segment. Residues 227–260 (DRLKVVLQVQRAHAGVLPTIKKIWREDKLMGFFR) lie on the Mitochondrial matrix side of the membrane. A helical membrane pass occupies residues 261 to 280 (GNGLNVMKVAPESAIKFCAY). Topologically, residues 281 to 303 (EMLKPMIGGEDGDIGTSGRLMAG) are mitochondrial intermembrane. Residues 304 to 317 (GMAGALAQTAIYPM) traverse the membrane as a helical segment. At 318-355 (DLVKTRLQTCVSEGGKAPKLWKLTKDIWVREGPRAFYK) the chain is on the mitochondrial matrix side. Residues 356–375 (GLFPSLLGIVPYAGIDLAAY) traverse the membrane as a helical segment. The Mitochondrial intermembrane segment spans residues 376–397 (ETLKDLSRTYILQDTEPGPLIQ). A helical transmembrane segment spans residues 398 to 415 (LSCGMTSGALGASCVYPL). The Mitochondrial matrix segment spans residues 416 to 449 (QVVRTRMQADSSKTTMKQEFMNTMKGEGLRGFYR). Residues 450 to 469 (GLLPNLLKVVPAASITYIVY) form a helical membrane-spanning segment. Over 470–479 (EAMKKNMALD) the chain is Mitochondrial intermembrane.

It belongs to the mitochondrial carrier (TC 2.A.29) family. As to expression, expressed in flowers, leaves, stems, roots and seedlings, mostly in seedlings.

It is found in the mitochondrion inner membrane. Its activity is regulated as follows. Counter-exchange transport activity is saturable and inhibited by pyridoxal-5'-phosphate, EDTA and EGTA. Activated by calcium Ca(2+) and manganese Mn(2+) ions, and slightly by iron Fe(2+) and zinc Zn(2+) ions. Repressed by copper ions Cu(2+) and slightly by magnesium Mg(2+) ions. Magnesium Mg(2+) ions promotes slightly ATP uptake, ATP-Mg(2+) being exchanged with ATP(4-). Its function is as follows. Calcium-dependent mitochondrial carrier protein that catalyzes the import of ATP co-transported with metal divalent cations across the mitochondrial inner membrane in exchange for phosphate (Pi). Can transport phosphate, AMP, ADP, ATP, adenosine 5'-phosphosulfate, sulfate and thiosulfate, and, to a lesser extent, other nucleotides. Binds calcium ions Ca(2+). Also mediates calcium uptake. The chain is Calcium-dependent mitochondrial ATP-magnesium/phosphate carrier protein 3 from Arabidopsis thaliana (Mouse-ear cress).